Reading from the N-terminus, the 170-residue chain is Adenine phosphoribosyltransferase (170 aa).

This sequence belongs to the purine/pyrimidine phosphoribosyltransferase family. In terms of assembly, homodimer.

The protein resides in the cytoplasm. It carries out the reaction AMP + diphosphate = 5-phospho-alpha-D-ribose 1-diphosphate + adenine. It participates in purine metabolism; AMP biosynthesis via salvage pathway; AMP from adenine: step 1/1. Functionally, catalyzes a salvage reaction resulting in the formation of AMP, that is energically less costly than de novo synthesis. This Thermotoga petrophila (strain ATCC BAA-488 / DSM 13995 / JCM 10881 / RKU-1) protein is Adenine phosphoribosyltransferase.